The primary structure comprises 204 residues: Lysozyme G (204 aa).

Residues 1-19 (MHLMLVLLGLAALLGTSQS) form the signal peptide. 2 cysteine pairs are disulfide-bonded: cysteine 23–cysteine 79 and cysteine 37–cysteine 48. Residues glutamate 92 and aspartate 105 contribute to the active site.

The protein belongs to the glycosyl hydrolase 23 family.

The protein resides in the secreted. The enzyme catalyses Hydrolysis of (1-&gt;4)-beta-linkages between N-acetylmuramic acid and N-acetyl-D-glucosamine residues in a peptidoglycan and between N-acetyl-D-glucosamine residues in chitodextrins.. Its function is as follows. Has bacteriolytic activity against M.luteus. This Dromaius novaehollandiae (Emu) protein is Lysozyme G.